Consider the following 513-residue polypeptide: Zinc finger CCCH-type with G patch domain-containing protein (513 aa).

Residue methionine 1 is modified to N-acetylmethionine. The disordered stretch occupies residues 92-131; it reads PVAPGAELETVPSRETGPGPTEPGQEEDDGEDEEGGAALS. Residues 115-126 show a composition bias toward acidic residues; the sequence is GQEEDDGEDEEG. A C3H1-type zinc finger spans residues 176-202; that stretch reads KSLKPCPFFLEGKCRFQENCRFSHGQV. Residues 267 to 298 form a disordered region; that stretch reads LPPLRTDPAGSSDSDGSDADDPSYARVVEPGA. Serine 278 and serine 355 each carry phosphoserine. In terms of domain architecture, G-patch spans 315–361; the sequence is TRGIGSRLLAKMGYEFGKGLGRRADGRVEPVHAVVLPRGKSLDQCAE. Disordered stretches follow at residues 367–394 and 493–513; these read TRAG…PPPR and QEAG…MTEF. The span at 497–513 shows a compositional bias: basic and acidic residues; it reads LQREQRKADTHKKMTEF.

Interacts with CHD4/Mi-2; the interaction is direct.

Its subcellular location is the nucleus. Functionally, transcription repressor that specifically binds the 5'-GGAG[GA]A[GA]A-3' consensus sequence. Represses transcription by recruiting the chromatin multiprotein complex NuRD to target promoters. Negatively regulates expression of EGFR, a gene involved in cell proliferation, survival and migration. Its ability to repress genes of the EGFR pathway suggest it may act as a tumor suppressor. This Ovis aries (Sheep) protein is Zinc finger CCCH-type with G patch domain-containing protein (ZGPAT).